We begin with the raw amino-acid sequence, 364 residues long: Methylthioribose-1-phosphate isomerase (364 aa).

Aspartate 254 acts as the Proton donor in catalysis.

It belongs to the eIF-2B alpha/beta/delta subunits family. MtnA subfamily.

Its subcellular location is the cytoplasm. It localises to the nucleus. The catalysed reaction is 5-(methylsulfanyl)-alpha-D-ribose 1-phosphate = 5-(methylsulfanyl)-D-ribulose 1-phosphate. The protein operates within amino-acid biosynthesis; L-methionine biosynthesis via salvage pathway; L-methionine from S-methyl-5-thio-alpha-D-ribose 1-phosphate: step 1/6. Catalyzes the interconversion of methylthioribose-1-phosphate (MTR-1-P) into methylthioribulose-1-phosphate (MTRu-1-P). The chain is Methylthioribose-1-phosphate isomerase from Drosophila ananassae (Fruit fly).